The chain runs to 321 residues: ATP-dependent 6-phosphofructokinase (321 aa).

An ATP-binding site is contributed by glycine 12. ADP is bound by residues 22 to 26 (RGVVR) and 55 to 60 (RYSVSD). ATP is bound by residues 73 to 74 (RF) and 103 to 106 (GDGS). Residue aspartate 104 participates in Mg(2+) binding. 127–129 (TID) contributes to the substrate binding site. Aspartate 129 serves as the catalytic Proton acceptor. Arginine 156 is a binding site for ADP. Residues arginine 164 and 171-173 (MGR) each bind substrate. Residues 187 to 189 (GCE) and 215 to 217 (KRH) each bind ADP. Substrate contacts are provided by residues glutamate 224, arginine 245, and 251-254 (HVQR).

This sequence belongs to the phosphofructokinase type A (PFKA) family. ATP-dependent PFK group I subfamily. Prokaryotic clade 'B1' sub-subfamily. In terms of assembly, homotetramer. Requires Mg(2+) as cofactor.

The protein localises to the cytoplasm. The enzyme catalyses beta-D-fructose 6-phosphate + ATP = beta-D-fructose 1,6-bisphosphate + ADP + H(+). It functions in the pathway carbohydrate degradation; glycolysis; D-glyceraldehyde 3-phosphate and glycerone phosphate from D-glucose: step 3/4. With respect to regulation, allosterically activated by ADP and other diphosphonucleosides, and allosterically inhibited by phosphoenolpyruvate. In terms of biological role, catalyzes the phosphorylation of D-fructose 6-phosphate to fructose 1,6-bisphosphate by ATP, the first committing step of glycolysis. This Mannheimia succiniciproducens (strain KCTC 0769BP / MBEL55E) protein is ATP-dependent 6-phosphofructokinase.